The sequence spans 257 residues: ATP synthase subunit a (257 aa).

Positions 1 to 4 are cleaved as a propeptide — removed in mature form; sequence MFIT. 8 consecutive transmembrane segments (helical) span residues 27–47, 58–78, 93–113, 122–142, 149–169, 189–209, 214–234, and 236–256; these read FSNF…LAII, IVPQ…LNLV, YFPF…LRLI, QLIF…ILGL, VFGL…LVLI, IIAG…FMGL, FIIG…EFGI, and FIQA…SLNL.

The protein belongs to the ATPase A chain family. As to quaternary structure, F-type ATPases have 2 components, CF(1) - the catalytic core - and CF(0) - the membrane proton channel. CF(1) has five subunits: alpha(3), beta(3), gamma(1), delta(1), epsilon(1). CF(0) has three main subunits: a, b and c.

The protein localises to the mitochondrion inner membrane. Functionally, mitochondrial membrane ATP synthase (F(1)F(0) ATP synthase or Complex V) produces ATP from ADP in the presence of a proton gradient across the membrane which is generated by electron transport complexes of the respiratory chain. F-type ATPases consist of two structural domains, F(1) - containing the extramembraneous catalytic core and F(0) - containing the membrane proton channel, linked together by a central stalk and a peripheral stalk. During catalysis, ATP synthesis in the catalytic domain of F(1) is coupled via a rotary mechanism of the central stalk subunits to proton translocation. Key component of the proton channel; it may play a direct role in the translocation of protons across the membrane. This chain is ATP synthase subunit a (atp6), found in Schizosaccharomyces pombe (strain 972 / ATCC 24843) (Fission yeast).